The primary structure comprises 337 residues: Transcription initiation factor IIB (337 aa).

A TFIIB-type zinc finger spans residues 37–68 (YTVECPECGSRALVRDYERAELVCSECGLVID). C41, C44, C60, and C63 together coordinate Zn(2+). Tandem repeats lie at residues 154 to 237 (SELD…SREL) and 248 to 329 (DYIP…ELAE).

Belongs to the TFIIB family.

In terms of biological role, stabilizes TBP binding to an archaeal box-A promoter. Also responsible for recruiting RNA polymerase II to the pre-initiation complex (DNA-TBP-TFIIB). This chain is Transcription initiation factor IIB, found in Methanothrix thermoacetophila (strain DSM 6194 / JCM 14653 / NBRC 101360 / PT) (Methanosaeta thermophila).